Here is a 303-residue protein sequence, read N- to C-terminus: Vesicle-trafficking protein SEC22c (303 aa).

Over 1 to 183 (MSLILFACVV…EPAPSFRMEP (183 aa)) the chain is Cytoplasmic. The region spanning 8–119 (CVVRVRDGLP…YAFLEFDNVI (112 aa)) is the Longin domain. The chain crosses the membrane as a helical span at residues 184–204 (VTALGILSLILNIMCAALNLI). Residues 205 to 223 (RGIHLAEHSLQVAHEEIGN) lie on the Lumenal side of the membrane. A helical membrane pass occupies residues 224–244 (ILAFLIPFVACIFQCYLYLFY). The Cytoplasmic segment spans residues 245–248 (SPAR). Residues 249-269 (TMKVVLMLLFICLGNVYLHGL) form a helical membrane-spanning segment. Position 270 (Arg270) is a topological domain, lumenal. The helical transmembrane segment at 271–291 (NLWQILFHIGVAFLSSHQILT) threads the bilayer. At 292 to 303 (RQLQDKQSDCGV) the chain is on the cytoplasmic side.

The protein belongs to the synaptobrevin family.

The protein resides in the endoplasmic reticulum membrane. Its function is as follows. May be involved in vesicle transport between the ER and the Golgi complex. In Bos taurus (Bovine), this protein is Vesicle-trafficking protein SEC22c (SEC22C).